Reading from the N-terminus, the 484-residue chain is MILTATFICFCLASAFNYFRARRQRSLIKNLKGPFTWPLMGAMHKLLFLTPINFFQRSTEYLTKYGTFSRCWVFHRLFIPLADLELSRQLLENDTHLETGYELMKDWLVGGVLMCQSEQWQKRHSLISGLFDKGNLEQLIDLSRHQTEQLLQKLAKQADQKVFDIWYTVSPIVLDLMVMTTCGAKPSEEYSKNLKDLSEIYRKRFLSLQSANRFNYWLSSPFMRKRQNRLIKRLNDEHNNLMAMHQSQNQLKIENGLDIYQLRPIPLKDHKSLLEILLESKDPQLTGEEICGELNTCNYLGYQLCSPALCFCLVTIARNPSVQQKCLDELNLAQIKDQGWDLEKLNYLDAVLHETMRLYPPQVIVGRQLKKDFPYTHSIVGDAELPCGSEIYINLYELQRNEVRYPKANHFDAQRFLDSPPELLSYSLGPRCCPARKFSMQLLKTLLAPILANFEVLPYGDEVRLDLRLVLGSSNGFQLALKPR.

Heme is bound at residue Cys433.

This sequence belongs to the cytochrome P450 family. The cofactor is heme.

The protein localises to the endoplasmic reticulum membrane. It is found in the microsome membrane. Functionally, may be involved in the metabolism of insect hormones and in the breakdown of synthetic insecticides. The chain is Probable cytochrome P450 316a1 (Cyp316a1) from Drosophila melanogaster (Fruit fly).